A 122-amino-acid chain; its full sequence is Large ribosomal subunit protein uL24 (122 aa).

The protein belongs to the universal ribosomal protein uL24 family. As to quaternary structure, part of the 50S ribosomal subunit.

One of two assembly initiator proteins, it binds directly to the 5'-end of the 23S rRNA, where it nucleates assembly of the 50S subunit. Functionally, one of the proteins that surrounds the polypeptide exit tunnel on the outside of the subunit. This is Large ribosomal subunit protein uL24 from Renibacterium salmoninarum (strain ATCC 33209 / DSM 20767 / JCM 11484 / NBRC 15589 / NCIMB 2235).